The primary structure comprises 418 residues: Protein FAM53A (418 aa).

2 disordered regions span residues 198 to 236 (TSPV…FNPR) and 248 to 269 (ETGN…LSRR). A compositionally biased stretch (low complexity) spans 205–229 (SSASSGFVDSSEGSTSSSTRWNSGG). The segment covering 248 to 265 (ETGNLLPSANSTPTSTPE) has biased composition (polar residues). A Nuclear localization signal motif is present at residues 285-293 (KKSRLKRRR).

The protein belongs to the FAM53 family.

The protein localises to the nucleus. May play an important role in neural development; the dorsomedial roof of the third ventricle. This chain is Protein FAM53A, found in Gallus gallus (Chicken).